Here is a 156-residue protein sequence, read N- to C-terminus: Isotocin-neurophysin IT 2 (156 aa).

The N-terminal stretch at 1–19 (MTGAAVSVCLLYALSVCSA) is a signal peptide. An intrachain disulfide couples C20 to C25. Glycine amide is present on G28. Intrachain disulfides connect C41-C85, C44-C58, C52-C75, C59-C65, C92-C105, C99-C117, and C106-C111.

The protein belongs to the vasopressin/oxytocin family. Post-translationally, seven disulfide bonds are present in neurophysin.

It localises to the secreted. In terms of biological role, isotocin causes contraction of smooth muscles. This Oncorhynchus keta (Chum salmon) protein is Isotocin-neurophysin IT 2.